The primary structure comprises 116 residues: Ribosome-binding factor A (116 aa).

Belongs to the RbfA family. In terms of assembly, monomer. Binds 30S ribosomal subunits, but not 50S ribosomal subunits or 70S ribosomes.

Its subcellular location is the cytoplasm. Functionally, one of several proteins that assist in the late maturation steps of the functional core of the 30S ribosomal subunit. Associates with free 30S ribosomal subunits (but not with 30S subunits that are part of 70S ribosomes or polysomes). Required for efficient processing of 16S rRNA. May interact with the 5'-terminal helix region of 16S rRNA. The chain is Ribosome-binding factor A from Streptococcus pneumoniae (strain Hungary19A-6).